We begin with the raw amino-acid sequence, 64 residues long: MPKMKTNRAAAKRFKVTAKGGIKSANAYTSHRFHGKTKKQRRNLRGTRMMNETTIKTYHELLQK.

It belongs to the bacterial ribosomal protein bL35 family.

This chain is Large ribosomal subunit protein bL35, found in Levilactobacillus brevis (strain ATCC 367 / BCRC 12310 / CIP 105137 / JCM 1170 / LMG 11437 / NCIMB 947 / NCTC 947) (Lactobacillus brevis).